A 355-amino-acid chain; its full sequence is Electron transfer flavoprotein subunit alpha, mitochondrial (355 aa).

295 to 323 serves as a coordination point for FAD; sequence LYIAVGISGAIQHLAGMKDSKVIVAINKD.

Belongs to the ETF alpha-subunit/FixB family. As to quaternary structure, heterodimer of an alpha and a beta subunit. FAD is required as a cofactor.

It is found in the mitochondrion matrix. In terms of biological role, the electron transfer flavoprotein serves as a specific electron acceptor for several dehydrogenases, including five acyl-CoA dehydrogenases, glutaryl-CoA and sarcosine dehydrogenase. It transfers the electrons to the main mitochondrial respiratory chain via ETF-ubiquinone oxidoreductase (ETF dehydrogenase). The chain is Electron transfer flavoprotein subunit alpha, mitochondrial (etfa) from Dictyostelium discoideum (Social amoeba).